The primary structure comprises 447 residues: DNA primase DnaG (447 aa).

Residues 200 to 274 (DSIIVVEGRA…DIDYVARAPE (75 aa)) enclose the Toprim domain. Residues Glu206, Asp248, and Asp250 each coordinate Mg(2+). A disordered region spans residues 316–339 (ERRRGGARKQEYTKKGSLNPQPQV).

Belongs to the archaeal DnaG primase family. In terms of assembly, forms a ternary complex with MCM helicase and DNA. Component of the archaeal exosome complex. It depends on Mg(2+) as a cofactor.

The enzyme catalyses ssDNA + n NTP = ssDNA/pppN(pN)n-1 hybrid + (n-1) diphosphate.. RNA polymerase that catalyzes the synthesis of short RNA molecules used as primers for DNA polymerase during DNA replication. Also part of the exosome, which is a complex involved in RNA degradation. Acts as a poly(A)-binding protein that enhances the interaction between heteromeric, adenine-rich transcripts and the exosome. The protein is DNA primase DnaG of Pyrococcus furiosus (strain ATCC 43587 / DSM 3638 / JCM 8422 / Vc1).